A 637-amino-acid polypeptide reads, in one-letter code: Biosynthetic arginine decarboxylase (637 aa).

Lysine 101 carries the post-translational modification N6-(pyridoxal phosphate)lysine. A substrate-binding site is contributed by 286 to 296; that stretch reads FDVGGGLAVDY.

It belongs to the Orn/Lys/Arg decarboxylase class-II family. SpeA subfamily. The cofactor is Mg(2+). Pyridoxal 5'-phosphate serves as cofactor.

It catalyses the reaction L-arginine + H(+) = agmatine + CO2. The protein operates within amine and polyamine biosynthesis; agmatine biosynthesis; agmatine from L-arginine: step 1/1. In terms of biological role, catalyzes the biosynthesis of agmatine from arginine. This chain is Biosynthetic arginine decarboxylase, found in Shewanella woodyi (strain ATCC 51908 / MS32).